A 516-amino-acid chain; its full sequence is Adenine DNA glycosylase (516 aa).

Residues 1-23 (MKKLRASVRSHKKQPANHKRRGK) are compositionally biased toward basic residues. Residues 1-38 (MKKLRASVRSHKKQPANHKRRGKCALSSSQAKPSGLDG) form a disordered region. The Proton donor/acceptor role is filled by glutamate 105. [4Fe-4S] cluster-binding residues include cysteine 261, cysteine 268, cysteine 271, and cysteine 277. Positions 335–467 (PREEYSATCV…AMKKVFRVYE (133 aa)) constitute a Nudix hydrolase domain. The Nudix box motif lies at 376-398 (VTLEPSGQHQHKALLQELQHWSA). The segment at 474 to 516 (CKGSKRPQVCTPSSRKKPSRGQQVLDRFFQRHIPTHKPNSTTQ) is disordered.

It belongs to the Nth/MutY family. The cofactor is [4Fe-4S] cluster. In terms of tissue distribution, expressed in brain, spleen, heart, liver and kidney.

It is found in the nucleus. The protein resides in the mitochondrion. It catalyses the reaction Hydrolyzes free adenine bases from 7,8-dihydro-8-oxoguanine:adenine mismatched double-stranded DNA, leaving an apurinic site.. Involved in oxidative DNA damage repair. Initiates repair of A*oxoG to C*G by removing the inappropriately paired adenine base from the DNA backbone. Possesses both adenine and 2-OH-A DNA glycosylase activities. The chain is Adenine DNA glycosylase (Mutyh) from Rattus norvegicus (Rat).